The chain runs to 306 residues: Beta-lactamase (306 aa).

The first 36 residues, 1–36 (MKLKTKASIKFGICVGLLCLSITGFTPFFNSTHAEA), serve as a signal peptide directing secretion. The active-site Acyl-ester intermediate is serine 89. 251 to 253 (KSG) contributes to the substrate binding site.

It belongs to the class-A beta-lactamase family.

The protein localises to the secreted. It carries out the reaction a beta-lactam + H2O = a substituted beta-amino acid. In terms of biological role, this protein is a beta-lactamase with a substrate specificity for penicillins. The chain is Beta-lactamase (penP) from Bacillus subtilis (strain 168).